Here is a 110-residue protein sequence, read N- to C-terminus: Large ribosomal subunit protein uL22 (110 aa).

It belongs to the universal ribosomal protein uL22 family. As to quaternary structure, part of the 50S ribosomal subunit.

Its function is as follows. This protein binds specifically to 23S rRNA; its binding is stimulated by other ribosomal proteins, e.g. L4, L17, and L20. It is important during the early stages of 50S assembly. It makes multiple contacts with different domains of the 23S rRNA in the assembled 50S subunit and ribosome. The globular domain of the protein is located near the polypeptide exit tunnel on the outside of the subunit, while an extended beta-hairpin is found that lines the wall of the exit tunnel in the center of the 70S ribosome. This Ruthia magnifica subsp. Calyptogena magnifica protein is Large ribosomal subunit protein uL22.